The following is a 433-amino-acid chain: MCVCQTMEVGQYGKNASRAGDRGVLLEPFIHQVGGHSSMMRYDDHTVCKPLISREQRFYESLPPEMKEFTPEYKGVVSVCFEGDSDGYINLVAYPYVESETVEQDDTPEREQPRRKHSRRSLHRSGSGSDHKEEKASLSFETSESSQETKSPKVELHSHSDVPFQMLDSNSGLSSEKISYNPWSLRCHKQQLSRMRSESKDRKLYKFLLLENVVHHFKYPCVLDLKMGTRQHGDDASAEKAARQMRKCEQSTSASLGVRVCGMQVYQLDTGHYLCRNKYYGRGLSIEGFRNALYQYLHNGLDLRRDLFEPILSKLRGLKAVLERQASYRFYSSSLLVIYDGKECRSELRLKHVDMGLPEVPPLCGPSTSPSNTSLEAGPSSPPKVDVRMIDFAHSTFKGFRDDPTVHDGPDRGYVFGLENLISIMEQMRDENQ.

The tract at residues 100 to 160 (ETVEQDDTPE…SPKVELHSHS (61 aa)) is disordered. A compositionally biased stretch (basic residues) spans 113-123 (PRRKHSRRSLH). Positions 139 to 149 (SFETSESSQET) are enriched in polar residues. Residues 150-160 (KSPKVELHSHS) are compositionally biased toward basic and acidic residues. Residue S151 is modified to Phosphoserine. 220–228 (PCVLDLKMG) is a substrate binding site. The tract at residues 362–383 (PLCGPSTSPSNTSLEAGPSSPP) is disordered. Polar residues predominate over residues 366–375 (PSTSPSNTSL).

This sequence belongs to the inositol phosphokinase (IPK) family.

Its subcellular location is the cytoplasm. It localises to the nucleus. It carries out the reaction 1D-myo-inositol hexakisphosphate + ATP = 5-diphospho-1D-myo-inositol 1,2,3,4,6-pentakisphosphate + ADP. The enzyme catalyses 1-diphospho-1D-myo-inositol 2,3,4,5,6-pentakisphosphate + ATP + H(+) = 1,5-bis(diphospho)-1D-myo-inositol 2,3,4,6-tetrakisphosphate + ADP. Converts inositol hexakisphosphate (InsP6) to diphosphoinositol pentakisphosphate (InsP7/PP-InsP5). Converts 1,3,4,5,6-pentakisphosphate (InsP5) to PP-InsP4. This chain is Inositol hexakisphosphate kinase 1 (Ip6k1), found in Rattus norvegicus (Rat).